The primary structure comprises 190 residues: GATA transcription factor 17 (190 aa).

A compositionally biased stretch (basic and acidic residues) spans 1–14 (MSEGSEDTKTKLDS). Disordered regions lie at residues 1–42 (MSEG…DTKR) and 77–101 (RQAA…NDLN). The segment at 38-92 (GDTKRTCVDCGTIRTPLWRGGPAGPKSLCNACGIKSRKKRQAALGMRSEEKKKNR) adopts a GATA-type zinc-finger fold.

This sequence belongs to the type IV zinc-finger family. Class B subfamily.

The protein localises to the nucleus. In terms of biological role, transcriptional regulator that specifically binds 5'-GATA-3' or 5'-GAT-3' motifs within gene promoters. The protein is GATA transcription factor 17 (GATA17) of Arabidopsis thaliana (Mouse-ear cress).